Here is a 268-residue protein sequence, read N- to C-terminus: Norsolorinic acid ketoreductase nor1 (268 aa).

The NADP(+) site is built by Ile-32, Asp-79, Asn-108, Tyr-182, Lys-186, Val-213, and Thr-215. Tyr-182 serves as the catalytic Proton donor. Lys-186 serves as the catalytic Lowers pKa of active site Tyr.

Belongs to the short-chain dehydrogenases/reductases (SDR) family.

The protein resides in the cytoplasm. The protein localises to the cytosol. Its subcellular location is the vacuole. The enzyme catalyses (1'S)-averantin + NADP(+) = norsolorinic acid + NADPH + H(+). Its pathway is mycotoxin biosynthesis. Its function is as follows. Norsolorinic acid ketoreductase; part of the fragmented gene cluster that mediates the biosynthesis of dothistromin (DOTH), a polyketide toxin very similar in structure to the aflatoxin precursor, versicolorin B. The first step of the pathway is the conversion of acetate to norsolorinic acid (NOR) and requires the fatty acid synthase subunits hexA and hexB, as well as the polyketide synthase pksA. PksA combines a hexanoyl starter unit and 7 malonyl-CoA extender units to synthesize the precursor NOR. The hexanoyl starter unit is provided to the acyl-carrier protein (ACP) domain by the fungal fatty acid synthase hexA/hexB. The second step is the conversion of NOR to averantin (AVN) and requires the norsolorinic acid ketoreductase nor1, which catalyzes the dehydration of norsolorinic acid to form (1'S)-averantin. The cytochrome P450 monooxygenase avnA then catalyzes the hydroxylation of AVN to 5'hydroxyaverantin (HAVN). The next step is performed by adhA that transforms HAVN to averufin (AVF). Averufin might then be converted to hydroxyversicolorone by cypX and avfA. Hydroxyversicolorone is further converted versiconal hemiacetal acetate (VHA) by moxY. VHA is then the substrate for the versiconal hemiacetal acetate esterase est1 to yield versiconal (VAL). Versicolorin B synthase vbsA then converts VAL to versicolorin B (VERB) by closing the bisfuran ring. Then, the activity of the versicolorin B desaturase verB leads to versicolorin A (VERA). DotB, a predicted chloroperoxidase, may perform epoxidation of the A-ring of VERA. Alternatively, a cytochrome P450, such as cypX or avnA could catalyze this step. It is also possible that another, uncharacterized, cytochrome P450 enzyme is responsible for this step. Opening of the epoxide could potentially be achieved by the epoxide hydrolase epoA. However, epoA seems not to be required for DOTH biosynthesis, but other epoxide hydrolases may have the ability to complement this hydrolysis. Alternatively, opening of the epoxide ring could be achieved non-enzymatically. The next step is the deoxygenation of ring A to yield the 5,8-dihydroxyanthraquinone which is most likely catalyzed by the NADPH dehydrogenase encoded by ver1. The last stages of DOTH biosynthesis are proposed to involve hydroxylation of the bisfuran. OrdB and norB might have oxidative roles here. An alternative possibility is that cytochrome P450 monoogenases such as avnA and cypX might perform these steps in addition to previously proposed steps. The protein is Norsolorinic acid ketoreductase nor1 of Dothistroma septosporum (strain NZE10 / CBS 128990) (Red band needle blight fungus).